Here is a 460-residue protein sequence, read N- to C-terminus: Diguanylate cyclase DosC (460 aa).

H98 contacts heme. The region spanning 325–458 (TPLSVLIIDV…GRNRVELWKA (134 aa)) is the GGDEF domain. D333 lines the Mg(2+) pocket. Substrate-binding residues include N341 and D350. D376 lines the Mg(2+) pocket. D376 acts as the Proton acceptor in catalysis.

Heme serves as cofactor. The cofactor is Mg(2+).

The enzyme catalyses 2 GTP = 3',3'-c-di-GMP + 2 diphosphate. It functions in the pathway purine metabolism; 3',5'-cyclic di-GMP biosynthesis. In terms of biological role, globin-coupled heme-based oxygen sensor protein displaying diguanylate cyclase (DGC) activity in response to oxygen availability. Thus, catalyzes the synthesis of cyclic diguanylate (c-di-GMP) via the condensation of 2 GTP molecules. Cyclic-di-GMP is a second messenger which controls cell surface-associated traits in bacteria. This chain is Diguanylate cyclase DosC (dosC), found in Shigella sonnei (strain Ss046).